Consider the following 119-residue polypeptide: U-scoloptoxin(16)-Er11a (119 aa).

The N-terminal stretch at 1-19 (MKSWTAAVLSLGLIYLSIS) is a signal peptide.

This sequence belongs to the scoloptoxin-16 family. Post-translationally, contains 4 disulfide bonds. In terms of tissue distribution, expressed by the venom gland.

The protein localises to the secreted. This chain is U-scoloptoxin(16)-Er11a, found in Ethmostigmus rubripes (Giant centipede).